Reading from the N-terminus, the 757-residue chain is MASLEDLIPTVNKLQDVMYDSGIDTLDLPILAVVGSQSSGKSSILETLVGRDFLPRGTGIVTRRPLVLQLNNISPNSPLIEEDDNSVNPHDEVTKISGFEAGTKPLEYRGKERNHADEWGEFLHIPGKRFYDFDDIKREIENETARIAGKDKGISKIPINLKVFSPHVLNLTLVDLPGITKVPIGEQPPDIEKQIKNLILDYIATPNCLILAVSPANVDLVNSESLKLAREVDPQGKRTIGVITKLDLMDSGTNALDILSGKMYPLKLGFVGVVNRSQQDIQLNKTVEESLDKEEDYFRKHPVYRTISTKCGTRYLAKLLNQTLLSHIRDKLPDIKTKLNTLISQTEQELARYGGVGATTNESRASLVLQLMNKFSTNFISSIDGTSSDINTKELCGGARIYYIYNNVFGNSLKSIDPTSNLSVLDVRTAIRNSTGPRPTLFVPELAFDLLVKPQIKLLLEPSQRCVELVYEELMKICHKCGSAELARYPKLKSMLIEVISELLRERLQPTRSYVESLIDIHRAYINTNHPNFLSATEAMDDIMKTRRKRNQELLKSKLSQQENGQTNGINGTSSISSNIDQDSAKNSDYDDDGIDAESKQTKDKFLNYFFGKDKKGQPVFDASDKKRSIAGDGNIEDFRNLQISDFSLGDIDDLENAEPPLTEREELECELIKRLIVSYFDIIREMIEDQVPKAVMCLLVNYCKDSVQNRLVTKLYKETLFEELLVEDQTLAQDRELCVKSLGVYKKAATLISNIL.

Residues 25–333 (TLDLPILAVV…LLSHIRDKLP (309 aa)) form the Dynamin-type G domain. The tract at residues 35-42 (GSQSSGKS) is G1 motif. Residue 35–42 (GSQSSGKS) participates in GTP binding. A G2 motif region spans residues 61–63 (VTR). A G3 motif region spans residues 175-178 (DLPG). Residues 175–179 (DLPGI) and 244–247 (TKLD) each bind GTP. Residues 244–247 (TKLD) form a G4 motif region. The interval 274–277 (VNRS) is G5 motif. The tract at residues 557–597 (SKLSQQENGQTNGINGTSSISSNIDQDSAKNSDYDDDGIDA) is disordered. The segment covering 567-580 (TNGINGTSSISSNI) has biased composition (low complexity). Ser-629 bears the Phosphoserine mark. The GED domain maps to 670–757 (CELIKRLIVS…KAATLISNIL (88 aa)).

It belongs to the TRAFAC class dynamin-like GTPase superfamily. Dynamin/Fzo/YdjA family. Interacts with FIS1 and MDV1.

The protein localises to the mitochondrion outer membrane. The catalysed reaction is GTP + H2O = GDP + phosphate + H(+). Functionally, microtubule-associated force-producing protein that participates mitochondrial fission. Fission of mitochondria occurs in many cell types and constitutes an important step in mitochondria morphology, which is balanced between fusion and fission. Functions antagonistically with FZO1. The protein is Dynamin-related protein DNM1 (DNM1) of Saccharomyces cerevisiae (strain ATCC 204508 / S288c) (Baker's yeast).